Consider the following 523-residue polypeptide: Cyclin-dependent kinase 17 (523 aa).

S9 carries the phosphoserine modification. The tract at residues 31–55 (IEESSSKDNEPIVKNGRPPTSHSMH) is disordered. S80, S92, and S105 each carry phosphoserine. The segment at 103-123 (MGSDGESDQASGTSSDEVQSP) is disordered. The span at 110–123 (DQASGTSSDEVQSP) shows a compositional bias: polar residues. Phosphoserine occurs at positions 137, 146, 165, and 180. Residues 192–473 (YIKLEKLGEG…AEEAMKHVYF (282 aa)) enclose the Protein kinase domain. Residues 198-206 (LGEGTYATV) and K221 each bind ATP. D313 serves as the catalytic Proton acceptor.

The protein belongs to the protein kinase superfamily. CMGC Ser/Thr protein kinase family. CDC2/CDKX subfamily. In terms of assembly, found in a complex containing CABLES1, CDK16 and TDRD7. Interacts with TDRD7. Brain specific. Within the brain it is concentrated in the neuronal layers of the hippocampus and olfactory bulb, which mostly consist of post-mitotic neurons.

The catalysed reaction is L-seryl-[protein] + ATP = O-phospho-L-seryl-[protein] + ADP + H(+). It catalyses the reaction L-threonyl-[protein] + ATP = O-phospho-L-threonyl-[protein] + ADP + H(+). Its function is as follows. May play a role in terminally differentiated neurons. Has a Ser/Thr-phosphorylating activity for histone H1. The sequence is that of Cyclin-dependent kinase 17 (Cdk17) from Rattus norvegicus (Rat).